The sequence spans 425 residues: Succinate--CoA ligase [ADP-forming] subunit beta, mitochondrial (425 aa).

The N-terminal 14 residues, 1 to 14, are a transit peptide targeting the mitochondrion; that stretch reads NNHGLQIQQQQQRN. The region spanning 23–250 is the ATP-grasp domain; that stretch reads MELLQEAGVS…SNSAYRQKKI (228 aa). Position 40 is an N6-acetyllysine (lysine 40). The residue at position 46 (tyrosine 46) is a Phosphotyrosine. Residue lysine 50 is modified to N6-acetyllysine; alternate. Lysine 50 carries the post-translational modification N6-succinyllysine; alternate. ATP-binding positions include lysine 60 and 67 to 69; that span reads GRG. Lysine 91, lysine 101, lysine 105, and lysine 178 each carry N6-acetyllysine. Residues asparagine 220 and aspartate 234 each coordinate Mg(2+). Serine 241 carries the post-translational modification Phosphoserine. A substrate-binding site is contributed by asparagine 285. Phosphothreonine is present on threonine 303. Lysine 330 is subject to N6-acetyllysine. Position 342–344 (342–344) interacts with substrate; that stretch reads GIM. Lysine 400 is modified (N6-acetyllysine).

This sequence belongs to the succinate/malate CoA ligase beta subunit family. ATP-specific subunit beta subfamily. Heterodimer of an alpha and a beta subunit. The beta subunit determines specificity for ATP. Interacts with ALAS2. The cofactor is Mg(2+).

The protein localises to the mitochondrion. It catalyses the reaction succinate + ATP + CoA = succinyl-CoA + ADP + phosphate. It participates in carbohydrate metabolism; tricarboxylic acid cycle; succinate from succinyl-CoA (ligase route): step 1/1. ATP-specific succinyl-CoA synthetase functions in the citric acid cycle (TCA), coupling the hydrolysis of succinyl-CoA to the synthesis of ATP and thus represents the only step of substrate-level phosphorylation in the TCA. The beta subunit provides nucleotide specificity of the enzyme and binds the substrate succinate, while the binding sites for coenzyme A and phosphate are found in the alpha subunit. In Sus scrofa (Pig), this protein is Succinate--CoA ligase [ADP-forming] subunit beta, mitochondrial.